The sequence spans 1215 residues: DNA-directed RNA polymerase subunit beta' (1215 aa).

4 residues coordinate Zn(2+): Cys-60, Cys-62, Cys-75, and Cys-78. Asp-450, Asp-452, and Asp-454 together coordinate Mg(2+). Cys-819, Cys-893, Cys-900, and Cys-903 together coordinate Zn(2+).

Belongs to the RNA polymerase beta' chain family. In terms of assembly, the RNAP catalytic core consists of 2 alpha, 1 beta, 1 beta' and 1 omega subunit. When a sigma factor is associated with the core the holoenzyme is formed, which can initiate transcription. Requires Mg(2+) as cofactor. The cofactor is Zn(2+).

It catalyses the reaction RNA(n) + a ribonucleoside 5'-triphosphate = RNA(n+1) + diphosphate. Functionally, DNA-dependent RNA polymerase catalyzes the transcription of DNA into RNA using the four ribonucleoside triphosphates as substrates. This is DNA-directed RNA polymerase subunit beta' from Levilactobacillus brevis (strain ATCC 367 / BCRC 12310 / CIP 105137 / JCM 1170 / LMG 11437 / NCIMB 947 / NCTC 947) (Lactobacillus brevis).